A 345-amino-acid chain; its full sequence is MKEFDLESYDYYLPKELIANYPVLPKEKAKLLVYERRSQTITHTTFEHVLDFFPKNALIVLNDTKVMKARLFGSKHAFLPSKTTEVFFHRFFKDNTALTQIKGKIKVGDKIFFDENYYAEVLELLHNGQRLIAFYDNQTPLNQENILKLLEQYGHMPLPPYIKRADESLDAHEYQSVFAKHTGAVAAPTASLHFSQHGLEKLLKDFKHAFLTLHVGAGTFLGVETKDIREHQIHTEVLRIPKKSQEILQKSQEILCIGTTALRSVEYFKRLENPNQEAFECDIFLHLANPILHVNYLLTNFHLPKSSLLMLVSAMIGLEKTKEIYKIAIEKKYRFYSYGDGMLIL.

The protein belongs to the QueA family. Monomer.

It is found in the cytoplasm. The enzyme catalyses 7-aminomethyl-7-carbaguanosine(34) in tRNA + S-adenosyl-L-methionine = epoxyqueuosine(34) in tRNA + adenine + L-methionine + 2 H(+). It functions in the pathway tRNA modification; tRNA-queuosine biosynthesis. Functionally, transfers and isomerizes the ribose moiety from AdoMet to the 7-aminomethyl group of 7-deazaguanine (preQ1-tRNA) to give epoxyqueuosine (oQ-tRNA). In Helicobacter pylori (strain G27), this protein is S-adenosylmethionine:tRNA ribosyltransferase-isomerase.